The primary structure comprises 209 residues: Uridine kinase (209 aa).

Residue 12 to 19 participates in ATP binding; it reads GGSGGGKT.

The protein belongs to the uridine kinase family.

The protein resides in the cytoplasm. It catalyses the reaction uridine + ATP = UMP + ADP + H(+). It carries out the reaction cytidine + ATP = CMP + ADP + H(+). Its pathway is pyrimidine metabolism; CTP biosynthesis via salvage pathway; CTP from cytidine: step 1/3. It participates in pyrimidine metabolism; UMP biosynthesis via salvage pathway; UMP from uridine: step 1/1. The chain is Uridine kinase from Streptococcus agalactiae serotype V (strain ATCC BAA-611 / 2603 V/R).